Consider the following 357-residue polypeptide: Glycerol-3-phosphate dehydrogenase [NAD(P)+] (357 aa).

Residues Ser-30, Phe-31, Arg-51, and Lys-124 each contribute to the NADPH site. Positions 124 and 152 each coordinate sn-glycerol 3-phosphate. NADPH is bound at residue Ala-156. Sn-glycerol 3-phosphate is bound by residues Lys-207, Asp-260, Ser-270, Arg-271, and Asn-272. Lys-207 (proton acceptor) is an active-site residue. Residue Arg-271 coordinates NADPH. Glu-297 lines the NADPH pocket.

It belongs to the NAD-dependent glycerol-3-phosphate dehydrogenase family.

It localises to the cytoplasm. The catalysed reaction is sn-glycerol 3-phosphate + NAD(+) = dihydroxyacetone phosphate + NADH + H(+). The enzyme catalyses sn-glycerol 3-phosphate + NADP(+) = dihydroxyacetone phosphate + NADPH + H(+). It functions in the pathway membrane lipid metabolism; glycerophospholipid metabolism. Functionally, catalyzes the reduction of the glycolytic intermediate dihydroxyacetone phosphate (DHAP) to sn-glycerol 3-phosphate (G3P), the key precursor for phospholipid synthesis. The chain is Glycerol-3-phosphate dehydrogenase [NAD(P)+] from Acinetobacter baumannii (strain AB307-0294).